An 863-amino-acid chain; its full sequence is Scm-like with four MBT domains protein 1 (863 aa).

MBT repeat units lie at residues 20-120 (FSWE…LEAP), 128-232 (SDWN…LQPP), 242-346 (ADWQ…INPP), and 354-451 (FDWA…LSTP). The segment at 638–773 (KKKNKRIGRP…SDDENKPPSP (136 aa)) is disordered. The span at 660–679 (KSSKRRKRRKNIFVHKKKRS) shows a compositional bias: basic residues. A compositionally biased stretch (polar residues) spans 680–691 (SASVDNTPVGSP). 2 stretches are compositionally biased toward acidic residues: residues 696 to 710 (GEDEEDADDGDEDSL) and 718 to 727 (QQEELQEESE). Positions 734–744 (SSSSPTQSETP) are enriched in low complexity. Phosphoserine occurs at positions 764 and 772. The SAM domain maps to 793–861 (WSVADVVRFI…RIKFAFYEQF (69 aa)).

In terms of assembly, interacts with MYOD1. Component of the SLC (SFMBT1-LSD1-CoREST) corepressor complex, which also contains KDM1A/LSD1 and RCOR1/CoREST. Interacts with KDM1A/LSD1 and RCOR1/CoREST. Interacts with MYOD1. Interacts with L3MBTL3. As to expression, highly expressed in the testis, low expression is detected in brain, kidney, heart and lung. Highly expressed in germ cells, where it associates with the synaptic regions of meiotic chromosomes in pachytene stage spermatocytes.

The protein resides in the nucleus. In terms of biological role, histone-binding protein, which is part of various corepressor complexes. Mediates the recruitment of corepressor complexes to target genes, followed by chromatin compaction and repression of transcription. Plays a role during myogenesis: required for the maintenance of undifferentiated states of myogenic progenitor cells via interaction with MYOD1. Interaction with MYOD1 leads to the recruitment of associated corepressors and silencing of MYOD1 target genes. Part of the SLC complex in germ cells, where it may play a role during spermatogenesis. This is Scm-like with four MBT domains protein 1 (Sfmbt1) from Mus musculus (Mouse).